A 281-amino-acid chain; its full sequence is NADPH-dependent 7-cyano-7-deazaguanine reductase (281 aa).

88-90 (IES) contributes to the substrate binding site. NADPH is bound at residue 90–91 (SK). Cys-189 (thioimide intermediate) is an active-site residue. Catalysis depends on Asp-196, which acts as the Proton donor. 228 to 229 (HE) contributes to the substrate binding site. NADPH is bound at residue 257–258 (RG).

Belongs to the GTP cyclohydrolase I family. QueF type 2 subfamily. Homodimer.

It is found in the cytoplasm. The enzyme catalyses 7-aminomethyl-7-carbaguanine + 2 NADP(+) = 7-cyano-7-deazaguanine + 2 NADPH + 3 H(+). Its pathway is tRNA modification; tRNA-queuosine biosynthesis. In terms of biological role, catalyzes the NADPH-dependent reduction of 7-cyano-7-deazaguanine (preQ0) to 7-aminomethyl-7-deazaguanine (preQ1). The protein is NADPH-dependent 7-cyano-7-deazaguanine reductase of Sodalis glossinidius (strain morsitans).